The following is a 101-amino-acid chain: Large ribosomal subunit protein bL28 (101 aa).

This sequence belongs to the bacterial ribosomal protein bL28 family.

This chain is Large ribosomal subunit protein bL28, found in Methylorubrum populi (strain ATCC BAA-705 / NCIMB 13946 / BJ001) (Methylobacterium populi).